The sequence spans 86 residues: Large ribosomal subunit protein bL27 (86 aa).

The span at 1–10 (MAQKKGGGST) shows a compositional bias: gly residues. Residues 1–21 (MAQKKGGGSTRNGRDSESKRL) form a disordered region.

The protein belongs to the bacterial ribosomal protein bL27 family.

The sequence is that of Large ribosomal subunit protein bL27 from Cupriavidus necator (strain ATCC 17699 / DSM 428 / KCTC 22496 / NCIMB 10442 / H16 / Stanier 337) (Ralstonia eutropha).